The primary structure comprises 297 residues: ATP synthase subunit a (297 aa).

8 helical membrane passes run 38-58, 77-97, 107-127, 133-153, 174-194, 202-222, 230-250, and 252-272; these read PLIP…IAIL, GYVL…VDLL, LFII…VGGI, SSTV…IMGV, TIPL…LLSI, VLAG…FFTL, VGLV…HVYF, and ILVS…YWSQ.

Belongs to the ATPase A chain family. F-type ATPases have 2 components, CF(1) - the catalytic core - and CF(0) - the membrane proton channel. CF(1) has five subunits: alpha(3), beta(3), gamma(1), delta(1), epsilon(1). CF(0) has three main subunits: a(1), b(2) and c(9-12). The alpha and beta chains form an alternating ring which encloses part of the gamma chain. CF(1) is attached to CF(0) by a central stalk formed by the gamma and epsilon chains, while a peripheral stalk is formed by the delta and b chains.

It localises to the cell membrane. Its function is as follows. Key component of the proton channel; it plays a direct role in the translocation of protons across the membrane. The sequence is that of ATP synthase subunit a from Mycoplasmoides gallisepticum (strain R(low / passage 15 / clone 2)) (Mycoplasma gallisepticum).